The primary structure comprises 101 residues: A-type ATP synthase subunit K (101 aa).

3 consecutive transmembrane segments (helical) span residues Trp-5–Pro-25, Ile-37–Ala-57, and Ile-75–Leu-95.

It belongs to the V-ATPase proteolipid subunit family. In terms of assembly, has multiple subunits with at least A(3), B(3), C, D, E, F, H, I and proteolipid K(x). The N-terminus is blocked.

It is found in the cell membrane. In terms of biological role, component of the A-type ATP synthase that produces ATP from ADP in the presence of a proton gradient across the membrane. In Sulfurisphaera tokodaii (strain DSM 16993 / JCM 10545 / NBRC 100140 / 7) (Sulfolobus tokodaii), this protein is A-type ATP synthase subunit K.